The sequence spans 2083 residues: Centriole proteome protein 16 (2083 aa).

The interval 205–333 is disordered; it reads DAPTMDFMPP…PAVPPPLSPS (129 aa). Low complexity predominate over residues 227-245; it reads TAETADTAGAAGRKSLSGA. Over residues 246 to 258 the composition is skewed to gly residues; that stretch reads SAGGAGPAKGGAK. 2 stretches are compositionally biased toward low complexity: residues 259 to 274 and 283 to 292; these read AGAA…SAGA and GSTAGAATPG. Residues 302-315 are compositionally biased toward acidic residues; that stretch reads GEEDFEDDLSEDLD. Positions 319 to 331 are enriched in pro residues; sequence PLPPSPAVPPPLS. WD repeat units follow at residues 482 to 523, 526 to 569, 579 to 620, 689 to 726, 728 to 767, 770 to 809, 812 to 853, 856 to 895, 990 to 1029, and 1041 to 1079; these read GHTA…CLAI, AHAS…AAGG, ATEY…GTSV, LHAA…YLLE, EHEG…YTTL, SHCG…QLYE, APGE…LLQE, QHRA…APAQ, VSPL…ALRG, and GHPS…MQQE. 2 disordered regions span residues 1113 to 1141 and 1225 to 1276; these read HTQA…VASA and ALVV…PPPP. Over residues 1263–1276 the composition is skewed to pro residues; it reads VPLPPSPQPLPPPP. WD repeat units lie at residues 1326-1365, 1403-1444, 1448-1486, 1497-1539, 1651-1691, 1736-1781, and 1785-1824; these read GHNR…RAAQ, YHPL…LVAA, EQSP…LEQR, RDPR…QPPQ, GQAA…AEPA, DPLD…QLSW, and RHPA…LVSY. The interval 1713-1743 is disordered; the sequence is APAHTLRHPPSAAPSSAASSSPLDPLDPLPA. Low complexity predominate over residues 1720-1743; the sequence is HPPSAAPSSAASSSPLDPLDPLPA. The tract at residues 1832–1870 is disordered; that stretch reads GPTPHSPGGTGRRSPRGAASPPPAPPRPGTGPLQAMAVS. Positions 1851 to 1860 are enriched in pro residues; that stretch reads SPPPAPPRPG. A WD 18 repeat occupies 2035–2073; sequence GHAGAVAAASYTGDGGHAVTASGSVLMVWDAAQLLKGVT.

The protein belongs to the WD repeat WDR90/POC16 family.

It localises to the cytoplasm. It is found in the cytoskeleton. The protein localises to the microtubule organizing center. The protein resides in the centrosome. Its subcellular location is the centriole. Its function is as follows. Required for flagellum assembly and/or maintenance. The sequence is that of Centriole proteome protein 16 from Chlamydomonas reinhardtii (Chlamydomonas smithii).